Consider the following 441-residue polypeptide: MKKFFQEFKADIKFKSAGPGQKLKESVGEKAHKEKPNQPAPRPPRQGPTNEAQMAAAAALARLEQKQSRAWGPTSQDTIRNQVRKELQAEATVSGSPEAPGTNVVSEPREEGSAHLAVPGVYFTCPLTGATLRKDQRDACIKEAILLHFSTDPVAASIMKIYTFNKDQDRVKLGVDTIAKYLDNIHLHPEEEKYRKIKLQNKVFQERINCLEGTHEFFEAIGFQKVLLPAQDQEDPEEFYVLSETTLAQPQSLERHKEQLLAAEPVRAKLDRQRRVFQPSPLASQFELPGDFFNLTAEEIKREQRLRSEAVERLSVLRTKAMREKEEQRGLRKYNYTLLRVRLPDGCLLQGTFYARERLGAVYGFVREALQSDWLPFELLASGGQKLSEDENLALNECGLVPSALLTFSWDMAVLEDIKAAGAEPDSILKPELLSAIEKLL.

Residues 1-10 (MKKFFQEFKA) form a mediates interaction with LMAN1 region. Lysine 2 carries the N-acetylalanine modification. Disordered stretches follow at residues 13–79 (KFKS…QDTI) and 87–106 (LQAEATVSGSPEAPGTNVVS). Positions 22–36 (KLKESVGEKAHKEKP) are enriched in basic and acidic residues. The VCP/p97-interacting motif (VIM) stretch occupies residues 51–63 (EAQMAAAAALARL). Residues 52–61 (AQMAAAAALA) are compositionally biased toward low complexity. At serine 96 the chain carries Phosphoserine. The region spanning 175–244 (VDTIAKYLDN…DPEEFYVLSE (70 aa)) is the PUB domain. The UBX domain occupies 332–408 (RKYNYTLLRV…GLVPSALLTF (77 aa)).

In terms of assembly, interacts with VCP through the PUB domain (via C-terminus) and VIM motif (via N-terminus); the interaction is direct. Forms a ternary complex with CAV1 and VCP. Interacts with SYVN1. Interacts with HERPUD1. Interacts with VCPKMT. May interact with DERL1. Interacts with PLAA, VCP and YOD1; may form a complex involved in macroautophagy. Interacts with LMAN1. In terms of tissue distribution, enhanced expression in testis.

The protein localises to the cytoplasm. It is found in the cytosol. It localises to the membrane. Its subcellular location is the nucleus. The protein resides in the cytoskeleton. The protein localises to the microtubule organizing center. It is found in the centrosome. It localises to the early endosome membrane. Its subcellular location is the late endosome membrane. The protein resides in the lysosome membrane. Functionally, may negatively regulate the ATPase activity of VCP, an ATP-driven segregase that associates with different cofactors to control a wide variety of cellular processes. As a cofactor of VCP, it may play a role in the transport of CAV1 to lysosomes for degradation. It may also play a role in endoplasmic reticulum-associated degradation (ERAD) of misfolded proteins. Together with VCP and other cofactors, it may play a role in macroautophagy, regulating for instance the clearance of damaged lysosomes. This chain is UBX domain-containing protein 6, found in Homo sapiens (Human).